The chain runs to 121 residues: Splicing factor 3B subunit 6 (121 aa).

Positions 12 to 25 (EVNRLLYVRNLPYK) are interaction with pre-mRNA branch site. The region spanning 15–90 (RLLYVRNLPY…RYLVVLYYQS (76 aa)) is the RRM domain.

The protein belongs to the SF3B6 family. Component of splicing factor SF3B complex. Component of the U11/U12 snRNPs that are part of the U12-type spliceosome.

The protein resides in the nucleus. In terms of biological role, involved in pre-mRNA splicing as a component of the splicing factor SF3B complex. SF3B complex is required for 'A' complex assembly formed by the stable binding of U2 snRNP to the branchpoint sequence (BPS) in pre-mRNA. Directly contacts the pre-mRNA branch site adenosine for the first catalytic step of splicing. Enters the spliceosome and associates with the pre-mRNA branch site as part of the 17S U2 or, in the case of the minor spliceosome, as part of the 18S U11/U12 snRNP complex, and thus may facilitate the interaction of these snRNP with the branch sites of U2 and U12 respectively. The protein is Splicing factor 3B subunit 6 of Drosophila melanogaster (Fruit fly).